A 95-amino-acid chain; its full sequence is Co-chaperonin GroES (95 aa).

The protein belongs to the GroES chaperonin family. Heptamer of 7 subunits arranged in a ring. Interacts with the chaperonin GroEL.

It localises to the cytoplasm. Together with the chaperonin GroEL, plays an essential role in assisting protein folding. The GroEL-GroES system forms a nano-cage that allows encapsulation of the non-native substrate proteins and provides a physical environment optimized to promote and accelerate protein folding. GroES binds to the apical surface of the GroEL ring, thereby capping the opening of the GroEL channel. The sequence is that of Co-chaperonin GroES from Maricaulis maris (strain MCS10) (Caulobacter maris).